A 122-amino-acid chain; its full sequence is Large ribosomal subunit protein uL24 (122 aa).

This sequence belongs to the universal ribosomal protein uL24 family. Part of the 50S ribosomal subunit.

Functionally, one of two assembly initiator proteins, it binds directly to the 5'-end of the 23S rRNA, where it nucleates assembly of the 50S subunit. Its function is as follows. One of the proteins that surrounds the polypeptide exit tunnel on the outside of the subunit. This is Large ribosomal subunit protein uL24 from Renibacterium salmoninarum (strain ATCC 33209 / DSM 20767 / JCM 11484 / NBRC 15589 / NCIMB 2235).